A 331-amino-acid polypeptide reads, in one-letter code: Benzylsuccinate synthase activating enzyme (331 aa).

In terms of domain architecture, Radical SAM core spans 15–315; it reads QDGPGIRTTI…VTIGGIVGIA (301 aa). 11 residues coordinate [4Fe-4S] cluster: cysteine 29, cysteine 33, cysteine 36, cysteine 55, cysteine 58, cysteine 61, cysteine 65, cysteine 89, cysteine 92, cysteine 95, and cysteine 99. 35-37 provides a ligand contact to S-adenosyl-L-methionine; that stretch reads WCH. 4Fe-4S ferredoxin-type domains follow at residues 46–75 and 80–109; these read QEFY…LVRN and TIVQ…IVGQ. Residues glycine 139, 189-191, and histidine 263 each bind S-adenosyl-L-methionine; that span reads DLK.

This sequence belongs to the organic radical-activating enzymes family. Requires [4Fe-4S] cluster as cofactor.

It catalyses the reaction glycyl-[protein] + reduced [flavodoxin] + S-adenosyl-L-methionine = glycin-2-yl radical-[protein] + semiquinone [flavodoxin] + 5'-deoxyadenosine + L-methionine + H(+). It functions in the pathway xenobiotic degradation; toluene degradation [regulation]. Functionally, activation of benzylsuccinate synthase under anaerobic conditions by generation of an organic free radical, using S-adenosylmethionine and reduced flavodoxin as cosubstrates to produce 5'-deoxy-adenosine. The chain is Benzylsuccinate synthase activating enzyme (bssD) from Thauera aromatica.